Reading from the N-terminus, the 426-residue chain is Tyrosine--tRNA ligase (426 aa).

Residue tyrosine 36 coordinates L-tyrosine. Positions 41-50 (PTAPSLHVGH) match the 'HIGH' region motif. Residues tyrosine 174 and glutamine 178 each contribute to the L-tyrosine site. The 'KMSKS' region motif lies at 234-238 (KLGKS). Lysine 237 serves as a coordination point for ATP. Residues 359–416 (DGIVDLLVASGLSPSRGAARRTIDEGGVLVNNIRIQSEEWTPRTSDFLHGRWLVLRRG) form the S4 RNA-binding domain.

This sequence belongs to the class-I aminoacyl-tRNA synthetase family. TyrS type 1 subfamily. Homodimer.

It localises to the cytoplasm. It carries out the reaction tRNA(Tyr) + L-tyrosine + ATP = L-tyrosyl-tRNA(Tyr) + AMP + diphosphate + H(+). In terms of biological role, catalyzes the attachment of tyrosine to tRNA(Tyr) in a two-step reaction: tyrosine is first activated by ATP to form Tyr-AMP and then transferred to the acceptor end of tRNA(Tyr). In Mycobacterium leprae (strain TN), this protein is Tyrosine--tRNA ligase.